The sequence spans 263 residues: Shikimate dehydrogenase (NADP(+)) (263 aa).

Shikimate contacts are provided by residues 14 to 16 and T60; that span reads SLS. K64 (proton acceptor) is an active-site residue. 2 residues coordinate shikimate: N85 and D100. Residues 123–127, 146–151, and L205 each bind NADP(+); these read GAGGA and NRTPQR. Position 207 (Y207) interacts with shikimate. Residue G228 coordinates NADP(+). Position 235 (Q235) interacts with shikimate.

It belongs to the shikimate dehydrogenase family. As to quaternary structure, homodimer.

The enzyme catalyses shikimate + NADP(+) = 3-dehydroshikimate + NADPH + H(+). It participates in metabolic intermediate biosynthesis; chorismate biosynthesis; chorismate from D-erythrose 4-phosphate and phosphoenolpyruvate: step 4/7. Involved in the biosynthesis of the chorismate, which leads to the biosynthesis of aromatic amino acids. Catalyzes the reversible NADPH linked reduction of 3-dehydroshikimate (DHSA) to yield shikimate (SA). The polypeptide is Shikimate dehydrogenase (NADP(+)) (Thermus thermophilus (strain ATCC 27634 / DSM 579 / HB8)).